We begin with the raw amino-acid sequence, 195 residues long: Pyridoxal 5'-phosphate synthase subunit PdxT (195 aa).

An L-glutamine-binding site is contributed by 53-55 (GES). Residue Cys-82 is the Nucleophile of the active site. Residues Arg-108 and 134–135 (IR) contribute to the L-glutamine site. Active-site charge relay system residues include His-173 and Glu-175.

The protein belongs to the glutaminase PdxT/SNO family. In terms of assembly, in the presence of PdxS, forms a dodecamer of heterodimers. Only shows activity in the heterodimer.

It catalyses the reaction aldehydo-D-ribose 5-phosphate + D-glyceraldehyde 3-phosphate + L-glutamine = pyridoxal 5'-phosphate + L-glutamate + phosphate + 3 H2O + H(+). It carries out the reaction L-glutamine + H2O = L-glutamate + NH4(+). The protein operates within cofactor biosynthesis; pyridoxal 5'-phosphate biosynthesis. Functionally, catalyzes the hydrolysis of glutamine to glutamate and ammonia as part of the biosynthesis of pyridoxal 5'-phosphate. The resulting ammonia molecule is channeled to the active site of PdxS. The protein is Pyridoxal 5'-phosphate synthase subunit PdxT of Methanobrevibacter smithii (strain ATCC 35061 / DSM 861 / OCM 144 / PS).